The following is a 313-amino-acid chain: Ribosomal RNA small subunit methyltransferase H (313 aa).

S-adenosyl-L-methionine is bound by residues 35–37, D55, F79, D101, and Q108; that span reads GGH.

Belongs to the methyltransferase superfamily. RsmH family.

Its subcellular location is the cytoplasm. The enzyme catalyses cytidine(1402) in 16S rRNA + S-adenosyl-L-methionine = N(4)-methylcytidine(1402) in 16S rRNA + S-adenosyl-L-homocysteine + H(+). In terms of biological role, specifically methylates the N4 position of cytidine in position 1402 (C1402) of 16S rRNA. This chain is Ribosomal RNA small subunit methyltransferase H, found in Escherichia coli O6:H1 (strain CFT073 / ATCC 700928 / UPEC).